Reading from the N-terminus, the 636-residue chain is Endoglucanase 4 (636 aa).

A signal peptide spans 1-25; the sequence is MTRRWSFLVQCFTFKKKEGVRSRYM. Residue D82 is the Nucleophile of the active site. Residues H400, D438, and E447 contribute to the active site. Residues 478 to 635 form the CBM3 domain; sequence KVEDEFFVEA…GDLVFGTLPN (158 aa).

Belongs to the glycosyl hydrolase 9 (cellulase E) family.

It localises to the secreted. It catalyses the reaction Endohydrolysis of (1-&gt;4)-beta-D-glucosidic linkages in cellulose, lichenin and cereal beta-D-glucans.. The protein is Endoglucanase 4 of Bacillus sp. (strain KSM-522).